The sequence spans 361 residues: Phospho-N-acetylmuramoyl-pentapeptide-transferase (361 aa).

The next 10 membrane-spanning stretches (helical) occupy residues 28–48 (LAVLVTLSLSFLIGPRLIKFL), 74–94 (TMGGIMIILSSCFSTLLLADL), 99–119 (IWITLFGFVSFGIIGFLDDYA), 135–155 (LLLQGIISLIVCILLEYTIDS), 167–187 (SLSMDLGYLYIFFAIFVIVGA), 203–223 (VPIALTAGSFALISYLVGNLI), 236–256 (TGELTIFCASIVGSCLGFLWF), 263–283 (VFMGDTGSLSLGGVLGIISVI), 288–308 (IVLGIVGGLFVIETISVIMQV), and 338–358 (KVVIRFWIISLIFVLIGLSSL).

Belongs to the glycosyltransferase 4 family. MraY subfamily. Mg(2+) is required as a cofactor.

It localises to the cell inner membrane. The catalysed reaction is UDP-N-acetyl-alpha-D-muramoyl-L-alanyl-gamma-D-glutamyl-meso-2,6-diaminopimeloyl-D-alanyl-D-alanine + di-trans,octa-cis-undecaprenyl phosphate = di-trans,octa-cis-undecaprenyl diphospho-N-acetyl-alpha-D-muramoyl-L-alanyl-D-glutamyl-meso-2,6-diaminopimeloyl-D-alanyl-D-alanine + UMP. It participates in cell wall biogenesis; peptidoglycan biosynthesis. Its function is as follows. Catalyzes the initial step of the lipid cycle reactions in the biosynthesis of the cell wall peptidoglycan: transfers peptidoglycan precursor phospho-MurNAc-pentapeptide from UDP-MurNAc-pentapeptide onto the lipid carrier undecaprenyl phosphate, yielding undecaprenyl-pyrophosphoryl-MurNAc-pentapeptide, known as lipid I. In Rickettsia bellii (strain RML369-C), this protein is Phospho-N-acetylmuramoyl-pentapeptide-transferase.